Here is a 282-residue protein sequence, read N- to C-terminus: Putative 4-diphosphocytidyl-2-C-methyl-D-erythritol kinase (282 aa).

Residue lysine 9 is part of the active site. 93–103 (PVSAGLAGGST) lines the ATP pocket. The active site involves aspartate 135.

This sequence belongs to the GHMP kinase family. IspE subfamily.

The catalysed reaction is 4-CDP-2-C-methyl-D-erythritol + ATP = 4-CDP-2-C-methyl-D-erythritol 2-phosphate + ADP + H(+). Catalyzes the phosphorylation of the position 2 hydroxy group of 4-diphosphocytidyl-2C-methyl-D-erythritol. This is Putative 4-diphosphocytidyl-2-C-methyl-D-erythritol kinase from Staphylococcus saprophyticus subsp. saprophyticus (strain ATCC 15305 / DSM 20229 / NCIMB 8711 / NCTC 7292 / S-41).